The following is a 251-amino-acid chain: ATP synthase subunit a (251 aa).

The next 5 helical transmembrane spans lie at 34–54 (VFLT…AASS), 93–113 (FVGT…LVPF), 130–150 (INTT…AGFS), 195–215 (LVVG…VMAL), and 216–236 (GLFT…AYIG).

This sequence belongs to the ATPase A chain family. F-type ATPases have 2 components, CF(1) - the catalytic core - and CF(0) - the membrane proton channel. CF(1) has five subunits: alpha(3), beta(3), gamma(1), delta(1), epsilon(1). CF(0) has four main subunits: a, b, b' and c.

The protein resides in the cellular thylakoid membrane. Key component of the proton channel; it plays a direct role in the translocation of protons across the membrane. This chain is ATP synthase subunit a, found in Trichormus variabilis (strain ATCC 29413 / PCC 7937) (Anabaena variabilis).